A 653-amino-acid chain; its full sequence is DUF21 domain-containing protein At1g55930, chloroplastic (653 aa).

A chloroplast-targeting transit peptide spans Met1–Val72. Helical transmembrane passes span Gly103–Ala123, Gly157–Ile177, Phe208–Thr228, Ile234–Leu254, and Trp280–Leu300. Positions Val149–Glu335 constitute a CNNM transmembrane domain. CBS domains follow at residues Met354 to Ser415 and Met421 to Glu479.

It localises to the plastid. Its subcellular location is the chloroplast membrane. The chain is DUF21 domain-containing protein At1g55930, chloroplastic (CBSDUFCH2) from Arabidopsis thaliana (Mouse-ear cress).